A 247-amino-acid polypeptide reads, in one-letter code: MNVLSCSINTLKGLYDISGVEVGQHFYWQIGDFQVHGQVLITSWVVIAILLGSATLAVRNPQTIPTGGQNFFEYVLEFIRDMSKTQIGEEYGPWVPFIGTMFLFIFVSNWSGALLPWKIIQLPHGELAAPTNDINTTVALALLTSVAYFYAGLTKRGLSYFGKYIQPTPILLPINILEDFTKPLSLSFRLFGNILADELVVVVLVSLVPSVVPIPVMFLGLFTSGIQALIFATLAAAYIGESMEGHH.

The next 5 membrane-spanning stretches (helical) occupy residues 38–58 (QVLITSWVVIAILLGSATLAV), 95–115 (VPFIGTMFLFIFVSNWSGALL), 134–154 (INTTVALALLTSVAYFYAGLT), 199–219 (LVVVVLVSLVPSVVPIPVMFL), and 220–240 (GLFTSGIQALIFATLAAAYIG).

This sequence belongs to the ATPase A chain family. In terms of assembly, F-type ATPases have 2 components, CF(1) - the catalytic core - and CF(0) - the membrane proton channel. CF(1) has five subunits: alpha(3), beta(3), gamma(1), delta(1), epsilon(1). CF(0) has four main subunits: a, b, b' and c.

The protein localises to the plastid. It localises to the chloroplast thylakoid membrane. Functionally, key component of the proton channel; it plays a direct role in the translocation of protons across the membrane. This is ATP synthase subunit a, chloroplastic from Jasminum nudiflorum (Winter jasmine).